The chain runs to 241 residues: Glucosamine-6-phosphate deaminase (241 aa).

Aspartate 67 functions as the Proton acceptor; for enolization step in the catalytic mechanism. The active-site For ring-opening step is the asparagine 136. Histidine 138 (proton acceptor; for ring-opening step) is an active-site residue. Glutamate 143 serves as the catalytic For ring-opening step.

Belongs to the glucosamine/galactosamine-6-phosphate isomerase family. NagB subfamily.

It carries out the reaction alpha-D-glucosamine 6-phosphate + H2O = beta-D-fructose 6-phosphate + NH4(+). The protein operates within amino-sugar metabolism; N-acetylneuraminate degradation; D-fructose 6-phosphate from N-acetylneuraminate: step 5/5. In terms of biological role, catalyzes the reversible isomerization-deamination of glucosamine 6-phosphate (GlcN6P) to form fructose 6-phosphate (Fru6P) and ammonium ion. The protein is Glucosamine-6-phosphate deaminase of Bacillus pumilus (strain SAFR-032).